We begin with the raw amino-acid sequence, 178 residues long: Caveolin-1 (178 aa).

Position 2 is an N-acetylserine (S2). S2 bears the Phosphoserine mark. The segment at 2–94 (SGGKYIDSEG…WKASFTTFTV (93 aa)) is required for homooligomerization. At 2-104 (SGGKYIDSEG…TKYWFYRLLS (103 aa)) the chain is on the cytoplasmic side. K5 is subject to N6-acetyllysine; alternate. A Glycyl lysine isopeptide (Lys-Gly) (interchain with G-Cter in ubiquitin); alternate cross-link involves residue K5. Y6 bears the Phosphotyrosine mark. S9 carries the phosphoserine modification. At Y14 the chain carries Phosphotyrosine; by ABL1. At Y25 the chain carries Phosphotyrosine. Glycyl lysine isopeptide (Lys-Gly) (interchain with G-Cter in ubiquitin) cross-links involve residues K26, K30, K39, K47, and K57. The interval 82–94 (DGIWKASFTTFTV) is interaction with CAVIN3. Positions 105 to 125 (ALFGIPMALIWGIYFAILSFL) form an intramembrane region, helical. Residues 126–178 (HIWAVVPCIRSYLIEIQCISRIYSICIHTFCDPLFEAIGKIFSNVRIALQKEI) are Cytoplasmic-facing. Residues 131-142 (VPCIRSYLIEIQ) form an interacts with SPRY1, SPRY2, SPRY3 and SPRY4 region. Residues C133, C143, and C156 are each lipidated (S-palmitoyl cysteine). The interacts with SPRY1, SPRY2, and SPRY4 stretch occupies residues 149–160 (SICIHTFCDPLF). The segment at 167–178 (FSNVRIALQKEI) is interacts with SPRY1, SPRY2, SPRY3 and SPRY4.

The protein belongs to the caveolin family. In terms of assembly, homooligomer. Interacts with GLIPR2. Interacts with NOSTRIN. Interacts with SNAP25 and STX1A. Interacts (via the N-terminus) with DPP4; the interaction is direct. Interacts with CTNNB1, CDH1 and JUP. Interacts with PACSIN2; this interaction induces membrane tubulation. Interacts with SLC7A9. Interacts with BMX and BTK. Interacts with TGFBR1. Interacts with CAVIN3 (via leucine-zipper domain) in a cholesterol-sensitive manner. Interacts with CAVIN1. Interacts with EHD2 in a cholesterol-dependent manner. Forms a ternary complex with UBXN6 and VCP; mediates CAV1 targeting to lysosomes for degradation. Interacts with ABCG1; this interaction regulates ABCG1-mediated cholesterol efflux. Interacts with NEU3; this interaction enhances NEU3 sialidase activity within caveola. Interacts (via C-terminus) with SPRY1, SPRY2 (via C-terminus), SPRY3, and SPRY4. Interacts with IGFBP5; this interaction allows trafficking of IGFBP5 from the plasma membrane to the nucleus. Phosphorylated at Tyr-14 by ABL1 in response to oxidative stress. In terms of processing, ubiquitinated. Undergo monoubiquitination and multi- and/or polyubiquitination. Monoubiquitination of N-terminal lysines promotes integration in a ternary complex with UBXN6 and VCP which promotes oligomeric CAV1 targeting to lysosomes for degradation. Ubiquitinated by ZNRF1; leading to degradation and modulation of the TLR4-mediated immune response.

It localises to the golgi apparatus membrane. It is found in the cell membrane. Its subcellular location is the membrane. The protein localises to the caveola. The protein resides in the membrane raft. In terms of biological role, may act as a scaffolding protein within caveolar membranes. Forms a stable heterooligomeric complex with CAV2 that targets to lipid rafts and drives caveolae formation. Mediates the recruitment of CAVIN proteins (CAVIN1/2/3/4) to the caveolae. Interacts directly with G-protein alpha subunits and can functionally regulate their activity. Involved in the costimulatory signal essential for T-cell receptor (TCR)-mediated T-cell activation. Its binding to DPP4 induces T-cell proliferation and NF-kappa-B activation in a T-cell receptor/CD3-dependent manner. Recruits CTNNB1 to caveolar membranes and may regulate CTNNB1-mediated signaling through the Wnt pathway. Negatively regulates TGFB1-mediated activation of SMAD2/3 by mediating the internalization of TGFBR1 from membrane rafts leading to its subsequent degradation. Binds 20(S)-hydroxycholesterol (20(S)-OHC). In Didelphis virginiana (North American opossum), this protein is Caveolin-1 (CAV1).